Reading from the N-terminus, the 318-residue chain is Trans-prenyltransferase (318 aa).

Residues 1–21 (MLHLIYISIIVVLIIILISYT) traverse the membrane as a helical segment. The isopentenyl diphosphate site is built by Lys85, Arg88, and His122. 2 residues coordinate Mg(2+): Asp129 and Asp135. Residue Arg140 participates in dimethylallyl diphosphate binding. Isopentenyl diphosphate is bound at residue Arg141. Residues Lys216, Thr217, and Gln254 each coordinate dimethylallyl diphosphate.

Belongs to the FPP/GGPP synthase family. Asfivirus trans-prenyltransferase subfamily. Mg(2+) serves as cofactor.

Its subcellular location is the host endoplasmic reticulum. It is found in the host membrane. It carries out the reaction isopentenyl diphosphate + dimethylallyl diphosphate = (2E)-geranyl diphosphate + diphosphate. The catalysed reaction is isopentenyl diphosphate + (2E)-geranyl diphosphate = (2E,6E)-farnesyl diphosphate + diphosphate. The enzyme catalyses isopentenyl diphosphate + (2E,6E)-farnesyl diphosphate = (2E,6E,10E)-geranylgeranyl diphosphate + diphosphate. It catalyses the reaction isopentenyl diphosphate + (2E,6E,10E)-geranylgeranyl diphosphate = (2E,6E,10E,14E)-geranylfarnesyl diphosphate + diphosphate. It functions in the pathway isoprenoid biosynthesis; farnesyl diphosphate biosynthesis; farnesyl diphosphate from geranyl diphosphate and isopentenyl diphosphate: step 1/1. Its pathway is isoprenoid biosynthesis; geranyl diphosphate biosynthesis; geranyl diphosphate from dimethylallyl diphosphate and isopentenyl diphosphate: step 1/1. The protein operates within isoprenoid biosynthesis; geranylgeranyl diphosphate biosynthesis; geranylgeranyl diphosphate from farnesyl diphosphate and isopentenyl diphosphate: step 1/1. Trans-prenyltransferase that catalyzes the sequential condensation of isopentenyl diphosphate (IPP) with different allylic diphosphates, such as dimethylallyl diphosphate (DMAPP), geranyl diphosphate (GPP), farnesyl diphosphate (FPP) and geranylgeranyl diphosphate (GGPP), farnesyl diphosphate being the best allylic substrate. The chain is Trans-prenyltransferase from African swine fever virus (strain Badajoz 1971 Vero-adapted) (Ba71V).